The sequence spans 345 residues: MRVADFSFDLPDELIARYPMAQRNASRLLTLDGNSGALGDKQFTELLEMINPGDLMVFNNTRVIPARMFGQKASGGKLEILVERMLDDKRILAHVRSSKSPKVDSLIHLDGGYQMKMVARHDTLFELELLSELTILEVLEAVGHMPLPPYIDRPDEDADKERYQTVYNQNPGAVAAPTAGLHFDDAMLDALKAKGVNIAFVTLHVGAGTFQPVRVDNVLEHKMHSEWANVPQDVVDLIAQTKAAGKRVVAVGTTSVRSLESAARASLGELKAFSGDTDIFIYPGYQFQVVDAMVTNFHLPESTLIMLVSAFAGFDHVMAAYQHAITQKYRFFSYGDAMFVTKKAH.

Belongs to the QueA family. As to quaternary structure, monomer.

Its subcellular location is the cytoplasm. It catalyses the reaction 7-aminomethyl-7-carbaguanosine(34) in tRNA + S-adenosyl-L-methionine = epoxyqueuosine(34) in tRNA + adenine + L-methionine + 2 H(+). Its pathway is tRNA modification; tRNA-queuosine biosynthesis. Its function is as follows. Transfers and isomerizes the ribose moiety from AdoMet to the 7-aminomethyl group of 7-deazaguanine (preQ1-tRNA) to give epoxyqueuosine (oQ-tRNA). This is S-adenosylmethionine:tRNA ribosyltransferase-isomerase from Shewanella putrefaciens (strain CN-32 / ATCC BAA-453).